A 218-amino-acid polypeptide reads, in one-letter code: Uracil-DNA glycosylase (218 aa).

It belongs to the uracil-DNA glycosylase (UDG) superfamily. UNG family. In terms of assembly, homodimer. Interacts with protein OPG148. Component of the Uracil-DNA glycosylase(UDG)-OPG148-polymerase complex; OPG148 and UDG form a heterodimeric processivity factor that associates with OPG71 to form the processive polymerase holoenzyme.

The enzyme catalyses Hydrolyzes single-stranded DNA or mismatched double-stranded DNA and polynucleotides, releasing free uracil.. Functionally, plays an essential role in viral replication as a component of the DNA polymerase processivity factor. Excises uracil residues from the DNA which can arise as a result of misincorporation of dUMP residues by DNA polymerase or due to deamination of cytosine. The protein is Uracil-DNA glycosylase (OPG116) of Monkeypox virus.